The following is a 571-amino-acid chain: MRVSKYLLSTQKETPANAEVISHQLMLRAGMIRRNASGLYSYLPTGLRVLRKVEAIVREEMNKAGAIEILMPMVQPADLWVETGRWEKFGPELLRFKDRHNRDFVLGPTHEEVITDLIRKEVSSYKQLPLNLYQIQTKFRDEVRPRFGMMRSREFLMKDAYSFHLDVDTMNETYEAMYNAYSNILTRMGLAFRPVLADTGSIGGSMSHEFHVLAQSGEDLIAYSTGSDYAANIEKAESPVPTEPRGAATEELRLVDTPNAKTIAELVEQFDLDITKTVKTLIVVGASEATPLVALIVRGDHELNEVKADKLDLVASPVEMASEALIRDAIGAGPGSLGPIGLNIPIVIDHSVSVMSDFAAGANVDDKHYFGINWERDLPTAQVADIRNVVEGEPTPDGLGTYAMARGIEVGHIFQLGTNYSKSMNATVLDENGKSQVLLMGCYGVGVSRIVAAAIEQNFDDRGIIWPEAIAPFSVGILPMNMHKSHRVTDIAEQLYKDLNEAGIDVLLDDRKERPGVMFADMELIGIPHTVVIGDRNIDAGVFEYKNRRTGEKQDIPFDQLLDFLKNAVKG.

It belongs to the class-II aminoacyl-tRNA synthetase family. ProS type 1 subfamily. Homodimer.

It localises to the cytoplasm. It catalyses the reaction tRNA(Pro) + L-proline + ATP = L-prolyl-tRNA(Pro) + AMP + diphosphate. Catalyzes the attachment of proline to tRNA(Pro) in a two-step reaction: proline is first activated by ATP to form Pro-AMP and then transferred to the acceptor end of tRNA(Pro). As ProRS can inadvertently accommodate and process non-cognate amino acids such as alanine and cysteine, to avoid such errors it has two additional distinct editing activities against alanine. One activity is designated as 'pretransfer' editing and involves the tRNA(Pro)-independent hydrolysis of activated Ala-AMP. The other activity is designated 'posttransfer' editing and involves deacylation of mischarged Ala-tRNA(Pro). The misacylated Cys-tRNA(Pro) is not edited by ProRS. The chain is Proline--tRNA ligase from Shewanella baltica (strain OS185).